A 111-amino-acid chain; its full sequence is MVTANFAAIAGLSLIAVALVAVFFSPYRRWLGFMLAGMFFWGLLEVVRFGVQVTFEMPVTYSYLTALSLAMVMVTFVLLREDKQAQKALANRQYIEHTPVYEDDQQQCSSR.

Over 1–5 (MVTAN) the chain is Periplasmic. Residues 6–26 (FAAIAGLSLIAVALVAVFFSP) form a helical membrane-spanning segment. Topologically, residues 27–30 (YRRW) are cytoplasmic. A helical transmembrane segment spans residues 31–51 (LGFMLAGMFFWGLLEVVRFGV). Residues 52–58 (QVTFEMP) lie on the Periplasmic side of the membrane. A helical transmembrane segment spans residues 59 to 79 (VTYSYLTALSLAMVMVTFVLL). Topologically, residues 80-111 (REDKQAQKALANRQYIEHTPVYEDDQQQCSSR) are cytoplasmic.

It localises to the cell inner membrane. Its function is as follows. May play a role in cellular filamentation, especially in response to ciprofloxacin. Increased expression confers tolerance to the antibiotic ciprofloxacin. The protein is Ciprofloxacin tolerance protein of Acinetobacter baumannii.